Consider the following 95-residue polypeptide: Costars family protein At4g33640 (95 aa).

An N-acetylmethionine modification is found at Met1.

Belongs to the costars family.

The protein is Costars family protein At4g33640 of Arabidopsis thaliana (Mouse-ear cress).